The following is a 283-amino-acid chain: Thymidylate synthase (283 aa).

R22 provides a ligand contact to dUMP. Catalysis depends on C160, which acts as the Nucleophile. DUMP is bound by residues 180–183 (RSCD), N191, and 221–223 (HIY). D183 is a (6R)-5,10-methylene-5,6,7,8-tetrahydrofolate binding site. Position 282 (S282) interacts with (6R)-5,10-methylene-5,6,7,8-tetrahydrofolate.

Belongs to the thymidylate synthase family. Bacterial-type ThyA subfamily. Homodimer.

It is found in the cytoplasm. The catalysed reaction is dUMP + (6R)-5,10-methylene-5,6,7,8-tetrahydrofolate = 7,8-dihydrofolate + dTMP. The protein operates within pyrimidine metabolism; dTTP biosynthesis. Its function is as follows. Catalyzes the reductive methylation of 2'-deoxyuridine-5'-monophosphate (dUMP) to 2'-deoxythymidine-5'-monophosphate (dTMP) while utilizing 5,10-methylenetetrahydrofolate (mTHF) as the methyl donor and reductant in the reaction, yielding dihydrofolate (DHF) as a by-product. This enzymatic reaction provides an intracellular de novo source of dTMP, an essential precursor for DNA biosynthesis. The chain is Thymidylate synthase from Marinomonas sp. (strain MWYL1).